Here is a 320-residue protein sequence, read N- to C-terminus: Olfactory receptor 7C1 (320 aa).

At Met1–Phe25 the chain is on the extracellular side. The N-linked (GlcNAc...) asparagine glycan is linked to Asn5. Residues Ile26–Ile46 form a helical membrane-spanning segment. Over Leu47–His54 the chain is Cytoplasmic. A helical membrane pass occupies residues Leu55 to Ser75. Topologically, residues Thr76–Ser99 are extracellular. Cys97 and Cys189 are oxidised to a cystine. Residues Gln100 to Tyr120 form a helical membrane-spanning segment. Topologically, residues Asp121–Gln139 are cytoplasmic. Residues Leu140–Thr160 form a helical membrane-spanning segment. The Extracellular segment spans residues Leu161–Val197. A helical membrane pass occupies residues Val198–Ser217. Residues Tyr218–Ala237 are Cytoplasmic-facing. Residues Phe238–Val258 traverse the membrane as a helical segment. Over Tyr259–Ser271 the chain is Extracellular. Residues Leu272–Leu292 traverse the membrane as a helical segment. Residues Arg293–Gly313 are Cytoplasmic-facing.

The protein belongs to the G-protein coupled receptor 1 family.

Its subcellular location is the cell membrane. Odorant receptor. This chain is Olfactory receptor 7C1 (OR7C1), found in Homo sapiens (Human).